The primary structure comprises 208 residues: LexA repressor (208 aa).

A DNA-binding region (H-T-H motif) is located at residues 28–48 (RAEIARQLGFRSANAAEEHLK). Active-site for autocatalytic cleavage activity residues include Ser125 and Lys162.

The protein belongs to the peptidase S24 family. As to quaternary structure, homodimer.

The enzyme catalyses Hydrolysis of Ala-|-Gly bond in repressor LexA.. In terms of biological role, represses a number of genes involved in the response to DNA damage (SOS response), including recA and lexA. In the presence of single-stranded DNA, RecA interacts with LexA causing an autocatalytic cleavage which disrupts the DNA-binding part of LexA, leading to derepression of the SOS regulon and eventually DNA repair. The sequence is that of LexA repressor from Alteromonas mediterranea (strain DSM 17117 / CIP 110805 / LMG 28347 / Deep ecotype).